We begin with the raw amino-acid sequence, 73 residues long: Sodium channel neurotoxin MeuNaTxalpha-13 (73 aa).

The signal sequence occupies residues 1 to 5 (TGVES). The LCN-type CS-alpha/beta domain occupies 7 to 71 (RDAYIAKPHN…VPIRIPGKCH (65 aa)). 4 disulfide bridges follow: Cys17/Cys70, Cys21/Cys43, Cys29/Cys53, and Cys33/Cys55. Residues 72 to 73 (RR) constitute a propeptide, removed by a carboxypeptidase.

This sequence belongs to the long (4 C-C) scorpion toxin superfamily. Sodium channel inhibitor family. Alpha subfamily. Expressed by the venom gland.

It localises to the secreted. Its function is as follows. Alpha toxins bind voltage-independently at site-3 of sodium channels (Nav) and inhibit the inactivation of the activated channels, thereby blocking neuronal transmission. In Mesobuthus eupeus (Lesser Asian scorpion), this protein is Sodium channel neurotoxin MeuNaTxalpha-13.